The sequence spans 426 residues: Inhibin beta A chain (426 aa).

Residues 1-20 (MPLLWLRGFLLASCWIIVKS) form the signal peptide. A propeptide spanning residues 21-310 (SPTPGSEGHS…EDHPHRRRRR (290 aa)) is cleaved from the precursor. The N-linked (GlcNAc...) asparagine glycan is linked to asparagine 165. Over residues 177 to 186 (QQQKHPQGSS) the composition is skewed to polar residues. Disordered regions lie at residues 177–201 (QQQK…MEER) and 260–291 (KKKK…SHRP). Residues 263 to 275 (KEEEGEGKKKDGG) are compositionally biased toward basic and acidic residues. Cystine bridges form between cysteine 314–cysteine 322, cysteine 321–cysteine 391, cysteine 350–cysteine 423, and cysteine 354–cysteine 425.

The protein belongs to the TGF-beta family. Dimeric, linked by one or more disulfide bonds. Inhibin A is a dimer of alpha/INHA and beta-A/INHBA. Activin A is a homodimer of beta-A/INHBA. Activin AB is a dimer of beta-A/INHBA and beta-B/INHBB. Interacts with FST and FSTL3; these interactions prevent activin A interaction to its type II receptor. Activin A interacts with ACVR2A. Activin A interacts with BMPR2. Inhibin A interacts with ACVR1; this interaction creates a non-signaling complex (NSC) that inhibits ACVR1-mediated BMP signaling. Inhibin A interacts with ACVR2A.

It localises to the secreted. Inhibins/activins are involved in regulating a number of diverse functions such as hypothalamic and pituitary hormone secretion, gonadal hormone secretion, germ cell development and maturation, erythroid differentiation, insulin secretion, nerve cell survival, embryonic axial development or bone growth, depending on their subunit composition. In terms of biological role, activin A is a homodimer of INHBA that plays a role in several essential biological processes including embryonic development, stem cell maintenance and differentiation, haematopoiesis, cell proliferation and tissue fibrosis. Signals through type I (such as ACVR1B or ACVR1C) and type II receptors (such as ACVR2A, ACVR2B or BMPR2) which, upon ligand binding, phosphorylate SMAD2 and SMAD3 intracellular signaling mediators that form a complex with SMAD4, translocate to the nucleus and modulate gene expression. Can also activate alternative non-canonical intracellular signaling pathways including the p38 MAPK, extracellular signal-regulated kinases 1/2 (ERK1/2) and c-Jun N-terminal kinases (JNKs) to modulate cell migration and differentiation. Alternatively, promotes osteoblastic differentiation via ACVRL1-SMAD1/5/9 pathway. In addition, can engage the type I receptor ACVR1 to form an ACVR1-activin A-type II receptor non-signaling complex (NSC) that renders receptors unavailable for engagement with BMPs, hence resulting in an apparent inhibition of ACVR1-mediated BMP signaling. Its function is as follows. Inhibin A is a dimer of alpha/INHA and beta-A/INHBA that functions as a feedback regulator in the hypothalamic-pituitary-gonadal (HPG) axis. Inhibits the secretion of FSH from the anterior pituitary gland by acting on pituitary gonadotrope cells. Antagonizes activin A by binding to the proteoglycan, betaglycan, and forming a stable complex with and, thereby, sequestering type II activin receptors while excluding type I receptor. The protein is Inhibin beta A chain (INHBA) of Equus caballus (Horse).